We begin with the raw amino-acid sequence, 490 residues long: Katanin p60 ATPase-containing subunit A-like 1 (490 aa).

Residue Met-1 is modified to N-acetylmethionine. The interval 96-182 (PAVWPPPVPA…ASDGEIPKFD (87 aa)) is disordered. The span at 116–127 (PNREVRPLRKEM) shows a compositional bias: basic and acidic residues. The span at 128 to 139 (AGVGARGPVGRA) shows a compositional bias: low complexity. Residues 143–169 (SKSEKPSASRDKDCRARGRDDKGRKNM) show a composition bias toward basic and acidic residues. The residue at position 174 (Ser-174) is a Phosphoserine. 248 to 255 (GPPGTGKT) contributes to the ATP binding site.

It belongs to the AAA ATPase family. Katanin p60 subunit A1 subfamily. A-like 1 sub-subfamily. Interacts with KATNB1 and KATNBL1.

The protein resides in the cytoplasm. It localises to the cytoskeleton. It is found in the spindle pole. The protein localises to the spindle. The catalysed reaction is n ATP + n H2O + a microtubule = n ADP + n phosphate + (n+1) alpha/beta tubulin heterodimers.. In terms of biological role, regulates microtubule dynamics in Sertoli cells, a process that is essential for spermiogenesis and male fertility. Severs microtubules in an ATP-dependent manner, promoting rapid reorganization of cellular microtubule arrays. Has microtubule-severing activity in vitro. The protein is Katanin p60 ATPase-containing subunit A-like 1 of Oryctolagus cuniculus (Rabbit).